We begin with the raw amino-acid sequence, 381 residues long: Genome polyprotein (381 aa).

The segment at 115–155 is disordered; that stretch reads ANDTIDTGGNSKKDVKPEQGSIQPSSNKGKEKDVNAGTSGT.

The protein belongs to the potyviridae genome polyprotein family. Genome polyprotein of potyviruses undergoes post-translational proteolytic processing by the main proteinase NIa-pro resulting in the production of at least ten individual proteins. The P1 proteinase and the HC-pro cleave only their respective C-termini autocatalytically. 6K1 is essential for proper proteolytic separation of P3 from CI.

The protein localises to the virion. The enzyme catalyses RNA(n) + a ribonucleoside 5'-triphosphate = RNA(n+1) + diphosphate. Its function is as follows. An RNA-dependent RNA polymerase that plays an essential role in the virus replication. In terms of biological role, involved in aphid transmission, cell-to-cell and systemis movement, encapsidation of the viral RNA and in the regulation of viral RNA amplification. The chain is Genome polyprotein from Capsicum annuum (Capsicum pepper).